The sequence spans 566 residues: NAD-dependent malic enzyme (566 aa).

Tyrosine 104 (proton donor) is an active-site residue. An NAD(+)-binding site is contributed by arginine 157. The Proton acceptor role is filled by lysine 175. 3 residues coordinate a divalent metal cation: glutamate 246, aspartate 247, and aspartate 270. NAD(+) contacts are provided by aspartate 270 and asparagine 419.

It belongs to the malic enzymes family. As to quaternary structure, homotetramer. It depends on Mg(2+) as a cofactor. Mn(2+) is required as a cofactor.

The enzyme catalyses (S)-malate + NAD(+) = pyruvate + CO2 + NADH. The catalysed reaction is oxaloacetate + H(+) = pyruvate + CO2. The protein is NAD-dependent malic enzyme of Cronobacter sakazakii (strain ATCC BAA-894) (Enterobacter sakazakii).